We begin with the raw amino-acid sequence, 152 residues long: Large ribosomal subunit protein bL9 (152 aa).

This sequence belongs to the bacterial ribosomal protein bL9 family.

Functionally, binds to the 23S rRNA. The protein is Large ribosomal subunit protein bL9 of Synechococcus sp. (strain RCC307).